The chain runs to 177 residues: Ferritin heavy chain, oocyte isoform (177 aa).

The Ferritin-like diiron domain occupies 7-156 (QNFHQECEAA…DHITNLRRMG (150 aa)). E24, E59, H62, E104, and Q138 together coordinate Fe cation.

The protein belongs to the ferritin family. As to quaternary structure, oligomer of 24 subunits. There are two types of subunits: L (light) chain and H (heavy) chain. The functional molecule is roughly spherical and contains a central cavity into which the insoluble mineral iron core is deposited.

Its subcellular location is the cytoplasm. The enzyme catalyses 4 Fe(2+) + O2 + 4 H(+) = 4 Fe(3+) + 2 H2O. In terms of biological role, stores iron in a soluble, non-toxic, readily available form. Important for iron homeostasis. Has ferroxidase activity. Iron is taken up in the ferrous form and deposited as ferric hydroxides after oxidation. This is Ferritin heavy chain, oocyte isoform from Xenopus laevis (African clawed frog).